A 229-amino-acid chain; its full sequence is B-cell antigen receptor complex-associated protein beta chain (229 aa).

The N-terminal stretch at 1-28 (MARLALSPVPSHWMVALLLLLSAEPVPA) is a signal peptide. Over 29–159 (ARSEDRYRNP…QLKQRNTLKD (131 aa)) the chain is Extracellular. The Ig-like V-type domain occupies 38–138 (PKGSACSRIW…TSEVYQGCGT (101 aa)). 2 cysteine pairs are disulfide-bonded: C43/C126 and C65/C122. 4 N-linked (GlcNAc...) asparagine glycosylation sites follow: N73, N101, N127, and N128. A helical membrane pass occupies residues 160-180 (GIIMIQTLLIILFIIVPIFLL). Topologically, residues 181-229 (LDKDDSKAGMEEDHTYEGLDIDQTATYEDIVTLRTGEVKWSVGEHPGQE) are cytoplasmic. In terms of domain architecture, ITAM spans 185–213 (DSKAGMEEDHTYEGLDIDQTATYEDIVTL). A phosphotyrosine; by SRC-type Tyr-kinases mark is found at Y196 and Y207.

In terms of assembly, heterodimer of alpha and beta chains; disulfide-linked. Part of the B-cell antigen receptor complex where the alpha/beta chain heterodimer is non-covalently associated with an antigen-specific membrane-bound surface immunoglobulin of two heavy chains and two light chains. Interacts with LYN. Post-translationally, phosphorylated on tyrosine upon B-cell activation by SRC-type Tyr-kinases such as BLK, LYN and SYK. B-cells.

The protein resides in the cell membrane. In terms of biological role, required in cooperation with CD79A for initiation of the signal transduction cascade activated by the B-cell antigen receptor complex (BCR) which leads to internalization of the complex, trafficking to late endosomes and antigen presentation. Enhances phosphorylation of CD79A, possibly by recruiting kinases which phosphorylate CD79A or by recruiting proteins which bind to CD79A and protect it from dephosphorylation. The sequence is that of B-cell antigen receptor complex-associated protein beta chain (CD79B) from Homo sapiens (Human).